We begin with the raw amino-acid sequence, 252 residues long: Trypsin iota (252 aa).

The first 19 residues, 1-19, serve as a signal peptide directing secretion; that stretch reads MAVYGIVATVLVLLLLGDA. The propeptide at 20 to 27 is activation peptide; sequence SDVEATGR. Residues 28–250 enclose the Peptidase S1 domain; the sequence is IIGGSDQLIR…LRPWIVKAAN (223 aa). An intrachain disulfide couples Cys53 to Cys69. Active-site charge relay system residues include His68 and Asp113. Cystine bridges form between Cys175/Cys193 and Cys202/Cys226. Ser206 acts as the Charge relay system in catalysis.

It belongs to the peptidase S1 family.

The protein localises to the secreted. Its subcellular location is the extracellular space. It catalyses the reaction Preferential cleavage: Arg-|-Xaa, Lys-|-Xaa.. This is Trypsin iota (iotaTry) from Drosophila melanogaster (Fruit fly).